We begin with the raw amino-acid sequence, 97 residues long: Co-chaperonin GroES (97 aa).

It belongs to the GroES chaperonin family. As to quaternary structure, heptamer of 7 subunits arranged in a ring. Interacts with the chaperonin GroEL.

The protein localises to the cytoplasm. Functionally, together with the chaperonin GroEL, plays an essential role in assisting protein folding. The GroEL-GroES system forms a nano-cage that allows encapsulation of the non-native substrate proteins and provides a physical environment optimized to promote and accelerate protein folding. GroES binds to the apical surface of the GroEL ring, thereby capping the opening of the GroEL channel. The sequence is that of Co-chaperonin GroES from Pseudomonas putida (strain W619).